Reading from the N-terminus, the 160-residue chain is General odorant-binding protein 2 (160 aa).

The first 20 residues, 1–20 (MFSFLILVFVASVADSVIGT), serve as a signal peptide directing secretion. 3 cysteine pairs are disulfide-bonded: cysteine 38–cysteine 73, cysteine 69–cysteine 127, and cysteine 116–cysteine 136.

Belongs to the PBP/GOBP family. As to quaternary structure, homodimer. Detected in antenna (at protein level). Expressed at high levels in antenna.

Present in the aqueous fluid surrounding olfactory sensory dendrites and are thought to aid in the capture and transport of hydrophobic odorants into and through this fluid. The polypeptide is General odorant-binding protein 2 (Bombyx mori (Silk moth)).